The following is a 340-amino-acid chain: KH domain-containing RNA-binding protein QKI (340 aa).

The KH domain occupies 87-153 (YVPVKEYPDF…WEHLNEDLHV (67 aa)). The SH3-binding motif lies at 275–278 (PPGP). Residues 323–329 (RVHPYQR) carry the Nuclear localization signal motif.

This sequence belongs to the quaking family. In terms of assembly, homodimer; does not require RNA to homodimerize.

The protein localises to the cytoplasm. It is found in the nucleus. Its function is as follows. RNA reader protein, which recognizes and binds specific RNAs, thereby regulating RNA metabolic processes, such as pre-mRNA splicing, circular RNA (circRNA) formation, mRNA export, mRNA stability and/or translation. Involved in various cellular processes, such as mRNA storage into stress granules, apoptosis, interferon response, glial cell fate and development. Binds to the 5'-NACUAAY-N(1,20)-UAAY-3' RNA core sequence. Acts as a mRNA modification reader that specifically recognizes and binds mRNA transcripts modified by internal N(7)-methylguanine (m7G). Promotes the formation of circular RNAs (circRNAs): acts by binding to sites flanking circRNA-forming exons. CircRNAs are produced by back-splicing circularization of pre-mRNAs. Required to protect and promote stability of mRNAs which promotes oligodendrocyte differentiation. Acts as an important regulator of muscle development. The protein is KH domain-containing RNA-binding protein QKI of Gallus gallus (Chicken).